The chain runs to 319 residues: tRNA dimethylallyltransferase (319 aa).

ATP is bound at residue 26-33 (GPTAAGKS). Substrate is bound at residue 28–33 (TAAGKS). Residues 51–54 (DSMQ) form an interaction with substrate tRNA region.

It belongs to the IPP transferase family. Monomer. Requires Mg(2+) as cofactor.

The enzyme catalyses adenosine(37) in tRNA + dimethylallyl diphosphate = N(6)-dimethylallyladenosine(37) in tRNA + diphosphate. Catalyzes the transfer of a dimethylallyl group onto the adenine at position 37 in tRNAs that read codons beginning with uridine, leading to the formation of N6-(dimethylallyl)adenosine (i(6)A). The sequence is that of tRNA dimethylallyltransferase from Salinispora tropica (strain ATCC BAA-916 / DSM 44818 / JCM 13857 / NBRC 105044 / CNB-440).